A 395-amino-acid polypeptide reads, in one-letter code: Extracellular cysteine protease (395 aa).

Positions 1 to 30 (MKKKLSYMITIMLAFTLSLALGLFFNSAHA) are cleaved as a signal peptide. A propeptide spanning residues 31–221 (DSLPQKNGAN…TLEYQSTRNE (191 aa)) is cleaved from the precursor. Active-site residues include C245, H341, and N362.

This sequence belongs to the peptidase C47 family. In terms of processing, proteolytically cleaved.

The protein localises to the secreted. The protein resides in the cell wall. In terms of biological role, cysteine protease able to cleave elastin, insulin, myoglobin, fibronectin, fibrinogen, HMW-kininogen, alpha-1-protease inhibitor and alpha-1-antitrypsin. Along with other extracellular proteases may contribute to the colonization and infection of human tissues. The chain is Extracellular cysteine protease (ecpA) from Staphylococcus epidermidis (strain ATCC 35984 / DSM 28319 / BCRC 17069 / CCUG 31568 / BM 3577 / RP62A).